Here is a 490-residue protein sequence, read N- to C-terminus: Solute carrier family 2, facilitated glucose transporter member 1 (490 aa).

Residues 1–10 lie on the Cytoplasmic side of the membrane; that stretch reads MESGSKMTAR. A helical transmembrane segment spans residues 11-32; that stretch reads LMLAVGGAVLGSLQFGYNTGVI. Residues 33–65 lie on the Extracellular side of the membrane; the sequence is NRPQKVIEDFYNHTWLYRYEEPISPATLTTLWS. An N-linked (GlcNAc...) asparagine glycan is attached at Asn-44. The chain crosses the membrane as a helical span at residues 66-86; sequence LSVAIFSVGGMIGSFSVGLFV. Over 87–89 the chain is Cytoplasmic; sequence NRF. The helical transmembrane segment at 90 to 111 threads the bilayer; it reads GRRNSMLMSNILAFLAAVLMGF. Over 112-119 the chain is Extracellular; it reads SKMALSFE. Residues 120 to 143 form a helical membrane-spanning segment; sequence MLILGRFIIGLYSGLTTGFVPMYV. The Cytoplasmic segment spans residues 144-154; it reads GEVSPTALRGA. The helical transmembrane segment at 155 to 175 threads the bilayer; the sequence is LGTFHQLGIVLGILIAQVFGL. Gln-160 contributes to the D-glucose binding site. The Extracellular portion of the chain corresponds to 176–184; it reads DLIMGNDSL. The helical transmembrane segment at 185-205 threads the bilayer; that stretch reads WPLLLGFIFVPALLQCIILPF. The Cytoplasmic portion of the chain corresponds to 206–270; that stretch reads APESPRFLLI…LFRSPMYRQP (65 aa). The helical transmembrane segment at 271–292 threads the bilayer; it reads ILIAIVLQLSQQLSGINAVFYY. D-glucose-binding positions include 281–282 and Asn-287; that span reads QQ. Over 293 to 305 the chain is Extracellular; it reads STSIFEKSGVEQP. The helical transmembrane segment at 306 to 327 threads the bilayer; that stretch reads VYATIGSGVVNTAFTVVSLFVV. Asn-316 lines the D-glucose pocket. The Cytoplasmic segment spans residues 328–333; it reads ERAGRR. Residues 334–354 form a helical membrane-spanning segment; it reads TLHLIGLAGMAGCAILMTIAL. The Extracellular segment spans residues 355–364; the sequence is TLLDQMPWMS. A helical membrane pass occupies residues 365-387; the sequence is YLSIVAIFGFVAFFEIGPGPIPW. D-glucose-binding residues include Glu-379 and Trp-387. At 388-400 the chain is on the cytoplasmic side; it reads FIVAELFSQGPRP. Residues 401–421 traverse the membrane as a helical segment; sequence AAFAVAGLSNWTSNFIVGMGF. The Extracellular portion of the chain corresponds to 422–428; that stretch reads QYIAQLC. A helical membrane pass occupies residues 429 to 449; the sequence is GSYVFIIFTVLLVLFFIFTYF. The Cytoplasmic segment spans residues 450-490; it reads KVPETKGRTFDEIAYRFRQGGASQSDKTPDEFHSLGADSQV. Positions 470-490 are disordered; that stretch reads GASQSDKTPDEFHSLGADSQV.

The protein belongs to the major facilitator superfamily. Sugar transporter (TC 2.A.1.1) family. Glucose transporter subfamily. Interacts with isoform 1 of BSG. Retinal cones (at protein level).

The protein resides in the cell membrane. It localises to the photoreceptor inner segment. The enzyme catalyses D-glucose(out) = D-glucose(in). Facilitative glucose transporter, which is responsible for constitutive or basal glucose uptake. Has a very broad substrate specificity; can transport a wide range of aldoses including both pentoses and hexoses. Most important energy carrier of the brain: present at the blood-brain barrier and assures the energy-independent, facilitative transport of glucose into the brain. In association with BSG and NXNL1, promotes retinal cone survival by increasing glucose uptake into photoreceptors. Required for mesendoderm differentiation. The chain is Solute carrier family 2, facilitated glucose transporter member 1 from Gallus gallus (Chicken).